A 78-amino-acid polypeptide reads, in one-letter code: LYR motif-containing protein 9 (78 aa).

It belongs to the complex I LYR family. LYRM9 subfamily.

In Branchiostoma floridae (Florida lancelet), this protein is LYR motif-containing protein 9 (LYRM9).